The following is a 380-amino-acid chain: Cell division protein FtsZ 2 (380 aa).

Residues 47–51, 134–136, glutamate 165, arginine 168, and aspartate 211 each bind GTP; these read GAGNN and GTG.

It belongs to the FtsZ family. Homodimer. Polymerizes to form a dynamic ring structure in a strictly GTP-dependent manner. Interacts directly with several other division proteins.

It is found in the cytoplasm. Its function is as follows. Essential cell division protein that forms a contractile ring structure (Z ring) at the future cell division site. The regulation of the ring assembly controls the timing and the location of cell division. One of the functions of the FtsZ ring is to recruit other cell division proteins to the septum to produce a new cell wall between the dividing cells. Binds GTP and shows GTPase activity. The protein is Cell division protein FtsZ 2 of Methanocaldococcus jannaschii (strain ATCC 43067 / DSM 2661 / JAL-1 / JCM 10045 / NBRC 100440) (Methanococcus jannaschii).